Here is a 393-residue protein sequence, read N- to C-terminus: MEMTRGICILGATGSIGKSTLDVVSRHPDQFRIVALTGNHRVAEMQLLCQQHHPELVVMAAPEAAQQLRVGLGDAGLKKIQVESGPEALAEAARMSGVDEVMAAIVGAAGLLPTLAAVEAGKKVYLANKECLVMAGNLFMERVRQHQVTLLPIDSEHNAVFQCFADGKGVRRILLTASGGPFRTWPAEHLAVVTPDQACAHPNWVMGRKISVDSATMMNKGLEVIEAHWLFDLPASRIDVMIHPQSIIHSMVEYVDGSVLAQLGNPDMRTPIAHALAFPERMESGVSSLDLAHGPDLQFEAPDLQRFPCLALAFDALQAGGAAATVLNAANEIAVQAFLEGHLPFLRIAAVVEDTLGELQPAAPDHLDDVLAIDQLAREVALRHLARHGSGMQ.

The NADPH site is built by T13, G14, S15, I16, and N128. K129 serves as a coordination point for 1-deoxy-D-xylulose 5-phosphate. NADPH is bound at residue E130. D154 contacts Mn(2+). Residues S155, E156, S178, and H201 each contribute to the 1-deoxy-D-xylulose 5-phosphate site. E156 is a binding site for Mn(2+). G207 is an NADPH binding site. Residues S214, N219, K220, and E223 each contribute to the 1-deoxy-D-xylulose 5-phosphate site. Position 223 (E223) interacts with Mn(2+).

Belongs to the DXR family. Mg(2+) serves as cofactor. Mn(2+) is required as a cofactor.

It catalyses the reaction 2-C-methyl-D-erythritol 4-phosphate + NADP(+) = 1-deoxy-D-xylulose 5-phosphate + NADPH + H(+). It functions in the pathway isoprenoid biosynthesis; isopentenyl diphosphate biosynthesis via DXP pathway; isopentenyl diphosphate from 1-deoxy-D-xylulose 5-phosphate: step 1/6. Functionally, catalyzes the NADPH-dependent rearrangement and reduction of 1-deoxy-D-xylulose-5-phosphate (DXP) to 2-C-methyl-D-erythritol 4-phosphate (MEP). In Acidithiobacillus ferrooxidans (strain ATCC 23270 / DSM 14882 / CIP 104768 / NCIMB 8455) (Ferrobacillus ferrooxidans (strain ATCC 23270)), this protein is 1-deoxy-D-xylulose 5-phosphate reductoisomerase.